The chain runs to 282 residues: Pantothenate synthetase (282 aa).

30–37 (MGYLHEGH) provides a ligand contact to ATP. Residue histidine 37 is the Proton donor of the active site. Glutamine 61 provides a ligand contact to (R)-pantoate. Residue glutamine 61 participates in beta-alanine binding. Residue 147 to 150 (GMKD) participates in ATP binding. A (R)-pantoate-binding site is contributed by glutamine 153. Residues valine 176 and 184-187 (KSSR) contribute to the ATP site.

It belongs to the pantothenate synthetase family. As to quaternary structure, homodimer.

The protein localises to the cytoplasm. It catalyses the reaction (R)-pantoate + beta-alanine + ATP = (R)-pantothenate + AMP + diphosphate + H(+). Its pathway is cofactor biosynthesis; (R)-pantothenate biosynthesis; (R)-pantothenate from (R)-pantoate and beta-alanine: step 1/1. Its function is as follows. Catalyzes the condensation of pantoate with beta-alanine in an ATP-dependent reaction via a pantoyl-adenylate intermediate. In Bacillus cereus (strain AH187), this protein is Pantothenate synthetase.